The following is a 563-amino-acid chain: uncharacterized protein (563 aa).

At 1-13 (MASRSCICQVSAG) the chain is on the cytoplasmic side. The helical transmembrane segment at 14 to 34 (IIFLIGAALLVAGLVIVLNVF) threads the bilayer. At 35–528 (PNIVNNQIND…LFTPVSTVNT (494 aa)) the chain is on the lumenal side. N43, N112, N133, N188, N265, N295, N315, and N502 each carry an N-linked (GlcNAc...) asparagine glycan. Residues 529–549 (ICWIAVGLGAGLIALSIVMVI) form a helical membrane-spanning segment. Residues 550–563 (VSFCCFRDEHHKTS) are Cytoplasmic-facing.

The protein belongs to the CD36 family.

It is found in the membrane. This is an uncharacterized protein from Caenorhabditis elegans.